The primary structure comprises 325 residues: Tetraacyldisaccharide 4'-kinase (325 aa).

ATP is bound at residue 55–62 (TAGGNGKT).

The protein belongs to the LpxK family.

The catalysed reaction is a lipid A disaccharide + ATP = a lipid IVA + ADP + H(+). The protein operates within glycolipid biosynthesis; lipid IV(A) biosynthesis; lipid IV(A) from (3R)-3-hydroxytetradecanoyl-[acyl-carrier-protein] and UDP-N-acetyl-alpha-D-glucosamine: step 6/6. Functionally, transfers the gamma-phosphate of ATP to the 4'-position of a tetraacyldisaccharide 1-phosphate intermediate (termed DS-1-P) to form tetraacyldisaccharide 1,4'-bis-phosphate (lipid IVA). The polypeptide is Tetraacyldisaccharide 4'-kinase (Salmonella arizonae (strain ATCC BAA-731 / CDC346-86 / RSK2980)).